The chain runs to 101 residues: Small ribosomal subunit protein uS14 (101 aa).

The interval 1–20 (MAKISAVERNKKRERLTKRD) is disordered.

The protein belongs to the universal ribosomal protein uS14 family. In terms of assembly, part of the 30S ribosomal subunit. Contacts proteins S3 and S10.

Functionally, binds 16S rRNA, required for the assembly of 30S particles and may also be responsible for determining the conformation of the 16S rRNA at the A site. The chain is Small ribosomal subunit protein uS14 from Rhodospirillum rubrum (strain ATCC 11170 / ATH 1.1.1 / DSM 467 / LMG 4362 / NCIMB 8255 / S1).